A 732-amino-acid chain; its full sequence is Acylamino-acid-releasing enzyme (732 aa).

Methionine 1 bears the N-acetylmethionine mark. Phosphoserine occurs at positions 185 and 187. Residues serine 587, aspartate 675, and histidine 707 each act as charge relay system in the active site.

In terms of assembly, homotetramer. In terms of tissue distribution, expressed in erythrocytes (at protein level).

It is found in the cytoplasm. The catalysed reaction is Cleavage of an N-acetyl or N-formyl amino acid from the N-terminus of a polypeptide.. Homotetramerization is required for activity. Tetramerization results in the formation of a gated channel which is involved in substrate selection and substrate access to the catalytic sites. Its function is as follows. This enzyme catalyzes the hydrolysis of the N-terminal peptide bond of an N-acetylated peptide to generate an N-acetylated amino acid and a peptide with a free N-terminus. It preferentially cleaves off Ac-Ala, Ac-Met and Ac-Ser. Also, involved in the degradation of oxidized and glycated proteins. This chain is Acylamino-acid-releasing enzyme (APEH), found in Homo sapiens (Human).